Reading from the N-terminus, the 440-residue chain is Ribulose bisphosphate carboxylase large chain (440 aa).

Lysine 4 carries the N6,N6,N6-trimethyllysine modification. Substrate contacts are provided by asparagine 113 and threonine 163. Lysine 165 functions as the Proton acceptor in the catalytic mechanism. A substrate-binding site is contributed by lysine 167. Residues lysine 191, aspartate 193, and glutamate 194 each contribute to the Mg(2+) site. Position 191 is an N6-carboxylysine (lysine 191). Histidine 284 acts as the Proton acceptor in catalysis. Substrate contacts are provided by arginine 285, histidine 317, and serine 369.

Belongs to the RuBisCO large chain family. Type I subfamily. Heterohexadecamer of 8 large chains and 8 small chains; disulfide-linked. The disulfide link is formed within the large subunit homodimers. Requires Mg(2+) as cofactor. Post-translationally, the disulfide bond which can form in the large chain dimeric partners within the hexadecamer appears to be associated with oxidative stress and protein turnover.

It localises to the plastid. The protein resides in the chloroplast. The catalysed reaction is 2 (2R)-3-phosphoglycerate + 2 H(+) = D-ribulose 1,5-bisphosphate + CO2 + H2O. It carries out the reaction D-ribulose 1,5-bisphosphate + O2 = 2-phosphoglycolate + (2R)-3-phosphoglycerate + 2 H(+). RuBisCO catalyzes two reactions: the carboxylation of D-ribulose 1,5-bisphosphate, the primary event in carbon dioxide fixation, as well as the oxidative fragmentation of the pentose substrate in the photorespiration process. Both reactions occur simultaneously and in competition at the same active site. The chain is Ribulose bisphosphate carboxylase large chain from Polystichum munitum (Western sword-fern).